The primary structure comprises 459 residues: Argininosuccinate lyase (459 aa).

The protein belongs to the lyase 1 family. Argininosuccinate lyase subfamily.

The protein resides in the cytoplasm. The enzyme catalyses 2-(N(omega)-L-arginino)succinate = fumarate + L-arginine. Its pathway is amino-acid biosynthesis; L-arginine biosynthesis; L-arginine from L-ornithine and carbamoyl phosphate: step 3/3. The protein is Argininosuccinate lyase of Staphylococcus aureus (strain USA300).